A 279-amino-acid chain; its full sequence is Thymidylate synthase 1 (279 aa).

141–142 (RR) is a dUMP binding site. The Nucleophile role is filled by Cys-161. DUMP contacts are provided by residues 181-184 (RSND), Asn-192, and 222-224 (HVY). Asp-184 contacts (6R)-5,10-methylene-5,6,7,8-tetrahydrofolate. Residue Ala-278 participates in (6R)-5,10-methylene-5,6,7,8-tetrahydrofolate binding.

Belongs to the thymidylate synthase family. Bacterial-type ThyA subfamily. As to quaternary structure, homodimer.

The protein resides in the cytoplasm. It carries out the reaction dUMP + (6R)-5,10-methylene-5,6,7,8-tetrahydrofolate = 7,8-dihydrofolate + dTMP. It participates in pyrimidine metabolism; dTTP biosynthesis. In terms of biological role, catalyzes the reductive methylation of 2'-deoxyuridine-5'-monophosphate (dUMP) to 2'-deoxythymidine-5'-monophosphate (dTMP) while utilizing 5,10-methylenetetrahydrofolate (mTHF) as the methyl donor and reductant in the reaction, yielding dihydrofolate (DHF) as a by-product. This enzymatic reaction provides an intracellular de novo source of dTMP, an essential precursor for DNA biosynthesis. This chain is Thymidylate synthase 1, found in Bacillus subtilis (strain 168).